Here is a 548-residue protein sequence, read N- to C-terminus: MANQGGPSRKSLSFSGHSFQGRKKASENEGGGGGGSDLLPRRSLTSSRSSISLSGERSGERTVKRLRLCKALTVPDSTTLFEACRRMAARRVDALLLTDSNALLCGILTDRDIATKVIAKQLNLEETPVSKVMTKNPVFVLSDTIAVEALQKMVQGKFRHLPVVENGEVIALLDIAKCLYDAIARMERSVEKGKAIAAAVEGVEKNWGTSIAGPNTFMETLRERIFKPSLSTIIPENTKVLKVGLDETVLGVTMKMVEYQSSAAMVMVENKLVGILTSKDILMRVISQNLPQETTTVEKVMTPNPESATVDMAIVEALHIMHNGKFLHLPVLDKDGDVVAVIDVIHITHAAVTTAGSTAGINNETANSMMQKFWDSAMALSPNEDGDETRSEEESMKLSSEIEVTKSFSYPNTFAFKLQDKKGRMHRFMCETQSLTTLITAILQRMGDDIEPDNLPQIMYEDEDNDKVVLASDNDLGAAVEHAKSIGWKGLKLHLDYTEERGHRRGLSSEDMDYDQSNSWAAAYKTVAAGAALAAGLGVLVYLKRNSN.

Residues 1 to 18 (MANQGGPSRKSLSFSGHS) show a composition bias toward polar residues. A disordered region spans residues 1–58 (MANQGGPSRKSLSFSGHSFQGRKKASENEGGGGGGSDLLPRRSLTSSRSSISLSGERS). Serine 18 carries the post-translational modification Phosphoserine. A compositionally biased stretch (low complexity) spans 37–56 (DLLPRRSLTSSRSSISLSGE). CBS domains are found at residues 63 to 126 (VKRL…NLEE), 133 to 190 (MTKN…ERSV), 233 to 293 (IIPE…LPQE), and 301 to 358 (MTPN…AGST). Residues 411–498 (PNTFAFKLQD…KGLKLHLDYT (88 aa)) enclose the PB1 domain. The chain crosses the membrane as a helical span at residues 521–543 (AAAYKTVAAGAALAAGLGVLVYL).

The protein resides in the membrane. This is CBS domain-containing protein CBSCBSPB4 (CBSCBSPB4) from Arabidopsis thaliana (Mouse-ear cress).